Consider the following 56-residue polypeptide: MGEQAGGWRAARIAVSLACRECKSRNYKTTKAPDQVVSLKKFCKQCKKHTVHDETK.

The protein belongs to the bacterial ribosomal protein bL33 family.

The polypeptide is Large ribosomal subunit protein bL33A (Sorangium cellulosum (strain So ce56) (Polyangium cellulosum (strain So ce56))).